The primary structure comprises 451 residues: UPF0210 protein lin0538 (451 aa).

This sequence belongs to the UPF0210 family. Homodimer.

This is UPF0210 protein lin0538 from Listeria innocua serovar 6a (strain ATCC BAA-680 / CLIP 11262).